We begin with the raw amino-acid sequence, 341 residues long: Eukaryotic translation initiation factor 3 subunit I (341 aa).

5 WD repeats span residues 8-49, 50-91, 135-184, 189-228, and 286-325; these read GHER…GTYR, GHQG…KTWD, QSDE…LLYN, ELNQPITDLQWSQDRTYFITASKDKTSKLISSKDLEVLKS, and GHFGPLNTVAADPTGKGYASGGEDGYVRVHAFDKGYYDFL.

The protein belongs to the eIF-3 subunit I family. In terms of assembly, component of the eukaryotic translation initiation factor 3 (eIF-3) complex.

It is found in the cytoplasm. Functionally, component of the eukaryotic translation initiation factor 3 (eIF-3) complex, which is involved in protein synthesis of a specialized repertoire of mRNAs and, together with other initiation factors, stimulates binding of mRNA and methionyl-tRNAi to the 40S ribosome. The eIF-3 complex specifically targets and initiates translation of a subset of mRNAs involved in cell proliferation. The polypeptide is Eukaryotic translation initiation factor 3 subunit I (Chaetomium globosum (strain ATCC 6205 / CBS 148.51 / DSM 1962 / NBRC 6347 / NRRL 1970) (Soil fungus)).